The chain runs to 105 residues: Large ribosomal subunit protein mL49 (105 aa).

Residues 1-15 constitute a mitochondrion transit peptide; the sequence is MRSSLKPVLSNLRFN.

Belongs to the mitochondrion-specific ribosomal protein mL49 family. In terms of assembly, component of the mitochondrial large ribosomal subunit (mt-LSU). Mature yeast 74S mitochondrial ribosomes consist of a small (37S) and a large (54S) subunit. The 37S small subunit contains a 15S ribosomal RNA (15S mt-rRNA) and at least 32 different proteins. The 54S large subunit contains a 21S rRNA (21S mt-rRNA) and at least 45 different proteins.

The protein localises to the mitochondrion. In terms of biological role, component of the mitochondrial ribosome (mitoribosome), a dedicated translation machinery responsible for the synthesis of mitochondrial genome-encoded proteins, including at least some of the essential transmembrane subunits of the mitochondrial respiratory chain. The mitoribosomes are attached to the mitochondrial inner membrane and translation products are cotranslationally integrated into the membrane. The protein is Large ribosomal subunit protein mL49 (img2) of Schizosaccharomyces pombe (strain 972 / ATCC 24843) (Fission yeast).